Here is a 290-residue protein sequence, read N- to C-terminus: 33 kDa chaperonin (290 aa).

2 disulfides stabilise this stretch: Cys-235/Cys-237 and Cys-268/Cys-271.

Belongs to the HSP33 family. Post-translationally, under oxidizing conditions two disulfide bonds are formed involving the reactive cysteines. Under reducing conditions zinc is bound to the reactive cysteines and the protein is inactive.

The protein resides in the cytoplasm. Functionally, redox regulated molecular chaperone. Protects both thermally unfolding and oxidatively damaged proteins from irreversible aggregation. Plays an important role in the bacterial defense system toward oxidative stress. In Streptococcus pneumoniae (strain CGSP14), this protein is 33 kDa chaperonin.